A 136-amino-acid polypeptide reads, in one-letter code: Large ribosomal subunit protein uL16 (136 aa).

This sequence belongs to the universal ribosomal protein uL16 family. Part of the 50S ribosomal subunit.

Functionally, binds 23S rRNA and is also seen to make contacts with the A and possibly P site tRNAs. The chain is Large ribosomal subunit protein uL16 from Rickettsia massiliae (strain Mtu5).